Consider the following 223-residue polypeptide: MYKLSKTTPFFFRRAFLCGRRGGYPESNLSNFGRPTASTLSTSQSSGICETNDYSNKPYFFQVKFEDRFSKKIDKFNECFRHFYYSHGGQQYMDKFESIFDNWEHEFSKTRGFRSPKTFINESDKGIEIRVELPGFSKENVKIDFSNGLLNIDALNKNTTIQQPSSNNQQVESQHQSLMEFKKSIKLPEDIDVSLIKAIMNNGILEISIPKNSYVKSTTINVQ.

The transit peptide at 1 to 23 (MYKLSKTTPFFFRRAFLCGRRGG) directs the protein to the mitochondrion. Residues 109 to 223 (KTRGFRSPKT…YVKSTTINVQ (115 aa)) enclose the sHSP domain.

This sequence belongs to the small heat shock protein (HSP20) family.

It is found in the mitochondrion. The chain is Small heat shock protein hspI, mitochondrial (hspI) from Dictyostelium discoideum (Social amoeba).